Reading from the N-terminus, the 22-residue chain is GADDSDWRKKGAVNVIXKDQGQ.

Positions 1 to 22 (GADDSDWRKKGAVNVIXKDQGQ) are disordered.

It belongs to the peptidase C1 family.

This is Cysteine proteinase from Trichomonas vaginalis.